The primary structure comprises 392 residues: Vascular endothelial growth factor A, long form (392 aa).

2 disordered regions span residues 1–44 (MTDR…VEGV) and 73–174 (DKPI…GPGR). Positions 89–104 (PGPEKRGEEEKEEERG) are enriched in basic and acidic residues. 2 stretches are compositionally biased toward low complexity: residues 121-143 (AAVCADSAPAARAPQAPARASVP) and 158-174 (PRSPSRRGSASRAGPGR). Intrachain disulfides connect Cys229–Cys271, Cys260–Cys305, and Cys264–Cys307. N-linked (GlcNAc...) asparagine glycosylation is present at Asn278. The span at 309-320 (PKKDRTKPEKKS) shows a compositional bias: basic and acidic residues. The disordered stretch occupies residues 309–337 (PKKDRTKPEKKSVRGKGKGQKRKRKKSRF). Basic residues predominate over residues 321–337 (VRGKGKGQKRKRKKSRF).

The protein belongs to the PDGF/VEGF growth factor family. In terms of assembly, homodimer; disulfide-linked. Also found as heterodimer with PGF. Interacts with NRP1. Interacts with isoform 2 of BSG. Interacts with CD82; this interaction inhibits VEGFA-mediated signaling pathway. In terms of processing, produced by use of an alternative upstream CUG codon and post-translationally processed into the N-terminal N-VEGF form and the C-terminal secreted VEGFA form. As to expression, in developing embryos, expressed mainly in the choroid plexus, paraventricular neuroepithelium, placenta and kidney glomeruli. Also found in bronchial epithelium, adrenal gland and in seminiferous tubules of testis. High expression continues in kidney glomeruli and choroid plexus in adults.

It localises to the cytoplasm. The protein resides in the nucleus. Its subcellular location is the secreted. The protein localises to the endoplasmic reticulum. It is found in the golgi apparatus. It localises to the extracellular space. The protein resides in the extracellular matrix. Its subcellular location is the cell membrane. In terms of biological role, participates in the induction of key genes involved in the response to hypoxia and in the induction of angiogenesis such as HIF1A. Involved in protecting cells from hypoxia-mediated cell death. Functionally, growth factor active in angiogenesis, vasculogenesis and endothelial cell growth. Induces endothelial cell proliferation, promotes cell migration, inhibits apoptosis and induces permeabilization of blood vessels. Binds to the FLT1/VEGFR1 and KDR/VEGFR2 receptors, heparan sulfate and heparin. Binds to the NRP1/neuropilin-1 receptor. Binding to NRP1 receptor initiates a signaling pathway needed for motor neuron axon guidance and cell body migration, including for the caudal migration of facial motor neurons from rhombomere 4 to rhombomere 6 during embryonic development. Also binds the DEAR/FBXW7-AS1 receptor. May play a role in increasing vascular permeability during lactation, when increased transport of molecules from the blood is required for efficient milk protein synthesis. This Mus musculus (Mouse) protein is Vascular endothelial growth factor A, long form (Vegfa).